Consider the following 227-residue polypeptide: PKHD-type hydroxylase GOX0559 (227 aa).

Residues Arg78–Ser178 form the Fe2OG dioxygenase domain. Positions 96, 98, and 159 each coordinate Fe cation. 2-oxoglutarate is bound at residue Arg169.

The cofactor is Fe(2+). It depends on L-ascorbate as a cofactor.

The polypeptide is PKHD-type hydroxylase GOX0559 (Gluconobacter oxydans (strain 621H) (Gluconobacter suboxydans)).